The following is a 793-amino-acid chain: Short transient receptor potential channel 1 (793 aa).

The interval methionine 1–glutamate 30 is disordered. Topologically, residues methionine 1–lysine 345 are cytoplasmic. The span at serine 15 to proline 28 shows a compositional bias: low complexity. ANK repeat units follow at residues leucine 46–leucine 75, leucine 83–glutamine 109, alanine 111–threonine 156, and methionine 158–lysine 180. Zn(2+)-binding residues include histidine 189, cysteine 193, cysteine 195, and cysteine 198. The discontinuously helical intramembrane region spans proline 346 to isoleucine 379. Topologically, residues isoleucine 380–lysine 386 are cytoplasmic. The chain crosses the membrane as a helical span at residues phenylalanine 387–tyrosine 404. Topologically, residues serine 405–arginine 422 are extracellular. Residues isoleucine 423–isoleucine 439 form a helical membrane-spanning segment. Residues lysine 440–arginine 455 are Cytoplasmic-facing. The chain crosses the membrane as a helical span at residues asparagine 456–valine 475. The Extracellular portion of the chain corresponds to alanine 476–leucine 496. Residues valine 497–tyrosine 517 form a helical membrane-spanning segment. At threonine 518–aspartate 536 the chain is on the cytoplasmic side. The chain crosses the membrane as a helical span at residues phenylalanine 537–leucine 558. Over tyrosine 559 to alanine 623 the chain is Extracellular. Cysteine 571 and cysteine 576 form a disulfide bridge. Residues valine 624–methionine 644 traverse the membrane as a helical segment. The Cytoplasmic segment spans residues leucine 645–asparagine 793.

The protein belongs to the transient receptor (TC 1.A.4) family. STrpC subfamily. TRPC1 sub-subfamily. Heterotetramer with TRPC4 and/or TRPC5. Forms a heteromeric ion channel with TRPC4, with a 1:3 TRPC1:TRPC4 stoichiometry. Unlike other TRP channel proteins, does not form a homomeric channel. Interacts with TRPC4AP. Interacts with ITPR3. Interacts with MX1 and RNF24. Interacts with FKBP4. Interacts with PLSCR1. Interacts with PKD2L2. Forms a heterotetramer with PKD2 with a 2:2 stoichiometry; has distinct channel properties separate from PKD2 or TRPC1 homomers alone. Post-translationally, activation of PRKCA induces phosphorylation of TRPC1 and subsequent Ca2+ entry into cells.

It is found in the cell membrane. It catalyses the reaction Ca(2+)(in) = Ca(2+)(out). The enzyme catalyses Na(+)(in) = Na(+)(out). The catalysed reaction is Li(+)(in) = Li(+)(out). It carries out the reaction Cs(+)(in) = Cs(+)(out). May be operated by a phosphatidylinositol second messenger system activated by receptor tyrosine kinases or G-protein coupled receptors. Also activated by intracellular calcium store depletion. Forms a receptor-activated non-selective calcium permeant cation channel. Forms a heteromeric ion channel with TRPC4 or TRPC5 that has reduced calcium permeability compared to the homomeric TRPC4 or TRPC5 channel. Also permeable to monovalent ions including sodium, lithium and cesium ions. The sequence is that of Short transient receptor potential channel 1 (Trpc1) from Mus musculus (Mouse).